A 271-amino-acid polypeptide reads, in one-letter code: Putative phosphoenolpyruvate synthase regulatory protein (271 aa).

Residue 151–158 (GVSRSGKT) participates in ADP binding.

The protein belongs to the pyruvate, phosphate/water dikinase regulatory protein family. PSRP subfamily.

The catalysed reaction is [pyruvate, water dikinase] + ADP = [pyruvate, water dikinase]-phosphate + AMP + H(+). The enzyme catalyses [pyruvate, water dikinase]-phosphate + phosphate + H(+) = [pyruvate, water dikinase] + diphosphate. Functionally, bifunctional serine/threonine kinase and phosphorylase involved in the regulation of the phosphoenolpyruvate synthase (PEPS) by catalyzing its phosphorylation/dephosphorylation. The sequence is that of Putative phosphoenolpyruvate synthase regulatory protein from Burkholderia cenocepacia (strain ATCC BAA-245 / DSM 16553 / LMG 16656 / NCTC 13227 / J2315 / CF5610) (Burkholderia cepacia (strain J2315)).